Reading from the N-terminus, the 613-residue chain is Probable LRR receptor-like serine/threonine-protein kinase At5g10290 (613 aa).

The signal sequence occupies residues 1-31 (MRMFSLQKMAMAFTLLFFACLCSFVSPDAQG). Topologically, residues 32 to 225 (DALFALRISL…SGDSSKPKTG (194 aa)) are extracellular. N-linked (GlcNAc...) asparagine glycans are attached at residues Asn-81 and Asn-116. LRR repeat units lie at residues 95-117 (NLKT…FGNL), 119-141 (SLTS…IGNL), 143-166 (KLQF…TGLP), and 167-189 (NLLN…LFEI). A glycan (N-linked (GlcNAc...) asparagine) is linked at Asn-155. N-linked (GlcNAc...) asparagine glycosylation is present at Asn-193. Residues 226–246 (IIAGVVAGVTVVLFGILLFLF) traverse the membrane as a helical segment. Topologically, residues 247-613 (CKDRHKGYRR…QDAIELSGGR (367 aa)) are cytoplasmic. The residue at position 287 (Thr-287) is a Phosphothreonine. The 280-residue stretch at 290-569 (FSEKNVLGQG…VVRMLEGEGL (280 aa)) folds into the Protein kinase domain. Residue 296 to 304 (LGQGGFGKV) participates in ATP binding. Residue Thr-313 is modified to Phosphothreonine. ATP is bound at residue Lys-318. The residue at position 371 (Ser-371) is a Phosphoserine. Phosphothreonine is present on Thr-390. Catalysis depends on Asp-417, which acts as the Proton acceptor. Phosphothreonine occurs at positions 450, 451, and 456. At Tyr-464 the chain carries Phosphotyrosine. A Phosphoserine modification is found at Ser-466. A Phosphothreonine modification is found at Thr-467. The residue at position 471 (Ser-471) is a Phosphoserine. Residue Thr-547 is modified to Phosphothreonine.

The protein belongs to the protein kinase superfamily. Ser/Thr protein kinase family.

It localises to the cell membrane. It catalyses the reaction L-seryl-[protein] + ATP = O-phospho-L-seryl-[protein] + ADP + H(+). It carries out the reaction L-threonyl-[protein] + ATP = O-phospho-L-threonyl-[protein] + ADP + H(+). In Arabidopsis thaliana (Mouse-ear cress), this protein is Probable LRR receptor-like serine/threonine-protein kinase At5g10290.